The chain runs to 60 residues: Large ribosomal subunit protein uL30 (60 aa).

It belongs to the universal ribosomal protein uL30 family. As to quaternary structure, part of the 50S ribosomal subunit.

The sequence is that of Large ribosomal subunit protein uL30 from Streptococcus uberis (strain ATCC BAA-854 / 0140J).